The following is a 554-amino-acid chain: Putative acyl-coenzyme A synthetase (554 aa).

Residue 195-206 (LLYSSGTTGPPK) participates in AMP binding.

It belongs to the ATP-dependent AMP-binding enzyme family.

The polypeptide is Putative acyl-coenzyme A synthetase (Emericella nidulans (strain FGSC A4 / ATCC 38163 / CBS 112.46 / NRRL 194 / M139) (Aspergillus nidulans)).